We begin with the raw amino-acid sequence, 374 residues long: Eukaryotic translation initiation factor 3 subunit M (374 aa).

Ser-2 bears the N-acetylserine mark. A phosphoserine mark is found at Ser-2 and Ser-152. Positions 180–339 constitute a PCI domain; sequence AASKVMVELL…RKVVVSHSTH (160 aa). Lys-254 bears the N6-acetyllysine mark. The segment at 344–374 is interaction with HSV-1 and HSV-2; sequence KQQWQQLYDTLNAWKQNLNKVKNSLLSLSDT. At Ser-367 the chain carries Phosphoserine.

In terms of assembly, component of the eukaryotic translation initiation factor 3 (eIF-3) complex, which is composed of 13 subunits: EIF3A, EIF3B, EIF3C, EIF3D, EIF3E, EIF3F, EIF3G, EIF3H, EIF3I, EIF3J, EIF3K, EIF3L and EIF3M. The eIF-3 complex appears to include 3 stable modules: module A is composed of EIF3A, EIF3B, EIF3G and EIF3I; module B is composed of EIF3F, EIF3H, and EIF3M; and module C is composed of EIF3C, EIF3D, EIF3E, EIF3K and EIF3L. EIF3C of module C binds EIF3B of module A and EIF3H of module B, thereby linking the three modules. EIF3J is a labile subunit that binds to the eIF-3 complex via EIF3B. The eIF-3 complex interacts with RPS6KB1 under conditions of nutrient depletion. Mitogenic stimulation leads to binding and activation of a complex composed of MTOR and RPTOR, leading to phosphorylation and release of RPS6KB1 and binding of EIF4B to eIF-3. In terms of tissue distribution, broadly expressed.

The protein localises to the cytoplasm. In terms of biological role, component of the eukaryotic translation initiation factor 3 (eIF-3) complex, which is required for several steps in the initiation of protein synthesis. The eIF-3 complex associates with the 40S ribosome and facilitates the recruitment of eIF-1, eIF-1A, eIF-2:GTP:methionyl-tRNAi and eIF-5 to form the 43S pre-initiation complex (43S PIC). The eIF-3 complex stimulates mRNA recruitment to the 43S PIC and scanning of the mRNA for AUG recognition. The eIF-3 complex is also required for disassembly and recycling of post-termination ribosomal complexes and subsequently prevents premature joining of the 40S and 60S ribosomal subunits prior to initiation. The eIF-3 complex specifically targets and initiates translation of a subset of mRNAs involved in cell proliferation, including cell cycling, differentiation and apoptosis, and uses different modes of RNA stem-loop binding to exert either translational activation or repression. (Microbial infection) May favor virus entry in case of infection with herpes simplex virus 1 (HSV1) or herpes simplex virus 2 (HSV2). In Homo sapiens (Human), this protein is Eukaryotic translation initiation factor 3 subunit M.